Here is a 309-residue protein sequence, read N- to C-terminus: Tagatose-6-phosphate kinase (309 aa).

Belongs to the carbohydrate kinase PfkB family. LacC subfamily.

The catalysed reaction is D-tagatofuranose 6-phosphate + ATP = D-tagatofuranose 1,6-bisphosphate + ADP + H(+). The protein operates within carbohydrate metabolism; D-tagatose 6-phosphate degradation; D-glyceraldehyde 3-phosphate and glycerone phosphate from D-tagatose 6-phosphate: step 1/2. The polypeptide is Tagatose-6-phosphate kinase (Streptococcus pyogenes serotype M4 (strain MGAS10750)).